We begin with the raw amino-acid sequence, 571 residues long: Proline-rich protein 35 (571 aa).

Disordered stretches follow at residues 1–27 (MSRE…PHYI), 79–187 (GSTT…EGSV), 286–402 (APVS…GSPE), and 476–571 (GPQA…GAEV). Over residues 16–26 (ARSRKPKKPHY) the composition is skewed to basic residues. The span at 165 to 175 (GMGGDPRGVGA) shows a compositional bias: gly residues. The span at 316 to 336 (TPRDPGQEGELERAAQSDPRR) shows a compositional bias: basic and acidic residues. Over residues 351–367 (PSLTRFCSRSSLPTGSS) the composition is skewed to polar residues. A compositionally biased stretch (pro residues) spans 380–399 (PETPGPEGPLPLQPRGPVPG).

The chain is Proline-rich protein 35 (PRR35) from Homo sapiens (Human).